The primary structure comprises 76 residues: Acyl carrier protein (76 aa).

Positions 1–75 constitute a Carrier domain; the sequence is MVLEKIKTLM…DVVLYIEKNL (75 aa). S35 is modified (O-(pantetheine 4'-phosphoryl)serine).

It belongs to the acyl carrier protein (ACP) family. In terms of processing, 4'-phosphopantetheine is transferred from CoA to a specific serine of apo-ACP by AcpS. This modification is essential for activity because fatty acids are bound in thioester linkage to the sulfhydryl of the prosthetic group.

The protein localises to the cytoplasm. Its pathway is lipid metabolism; fatty acid biosynthesis. Carrier of the growing fatty acid chain in fatty acid biosynthesis. The polypeptide is Acyl carrier protein (Phytoplasma australiense).